A 107-amino-acid chain; its full sequence is Large ribosomal subunit protein P1 (107 aa).

The tract at residues 67-107 is disordered; it reads GAAPAAAAPAAGGAPAAGAAPKKEEKKEPSEEEDMGFSLFD. Residues 69 to 86 show a composition bias toward low complexity; it reads APAAAAPAAGGAPAAGAA.

Belongs to the eukaryotic ribosomal protein P1/P2 family. P1 and P2 exist as dimers at the large ribosomal subunit.

Functionally, plays an important role in the elongation step of protein synthesis. The polypeptide is Large ribosomal subunit protein P1 (Chlamydomonas reinhardtii (Chlamydomonas smithii)).